Here is a 236-residue protein sequence, read N- to C-terminus: Thiamine import ATP-binding protein ThiQ (236 aa).

In terms of domain architecture, ABC transporter spans 2–230 (LKLEKITYLY…SAAKASVLGI (229 aa)). 32-39 (GPSGAGKS) contributes to the ATP binding site.

This sequence belongs to the ABC transporter superfamily. Thiamine importer (TC 3.A.1.19.1) family. In terms of assembly, the complex is composed of two ATP-binding proteins (ThiQ), two transmembrane proteins (ThiP) and a solute-binding protein (ThiB).

Its subcellular location is the cell inner membrane. The catalysed reaction is thiamine(out) + ATP + H2O = thiamine(in) + ADP + phosphate + H(+). Its function is as follows. Part of the ABC transporter complex ThiBPQ involved in thiamine import. Responsible for energy coupling to the transport system. This chain is Thiamine import ATP-binding protein ThiQ, found in Yersinia pestis bv. Antiqua (strain Antiqua).